A 301-amino-acid polypeptide reads, in one-letter code: Aspartate carbamoyltransferase catalytic subunit (301 aa).

Positions 46 and 47 each coordinate carbamoyl phosphate. Residue lysine 74 coordinates L-aspartate. The carbamoyl phosphate site is built by arginine 96, histidine 124, and glutamine 127. 2 residues coordinate L-aspartate: arginine 157 and arginine 208. Carbamoyl phosphate is bound by residues alanine 249 and proline 250.

The protein belongs to the aspartate/ornithine carbamoyltransferase superfamily. ATCase family. Heterododecamer (2C3:3R2) of six catalytic PyrB chains organized as two trimers (C3), and six regulatory PyrI chains organized as three dimers (R2).

The catalysed reaction is carbamoyl phosphate + L-aspartate = N-carbamoyl-L-aspartate + phosphate + H(+). It functions in the pathway pyrimidine metabolism; UMP biosynthesis via de novo pathway; (S)-dihydroorotate from bicarbonate: step 2/3. Functionally, catalyzes the condensation of carbamoyl phosphate and aspartate to form carbamoyl aspartate and inorganic phosphate, the committed step in the de novo pyrimidine nucleotide biosynthesis pathway. This Bacillus cereus (strain ATCC 14579 / DSM 31 / CCUG 7414 / JCM 2152 / NBRC 15305 / NCIMB 9373 / NCTC 2599 / NRRL B-3711) protein is Aspartate carbamoyltransferase catalytic subunit.